The chain runs to 214 residues: Pyridoxine/pyridoxamine 5'-phosphate oxidase (214 aa).

Substrate contacts are provided by residues 8–11 and K67; that span reads RKSY. Residues 62 to 67, 77 to 78, K84, and Q106 contribute to the FMN site; these read RVVLLK and YT. Residues Y124, R128, and S132 each coordinate substrate. FMN contacts are provided by residues 141–142 and W186; that span reads QS. A substrate-binding site is contributed by 192–194; that stretch reads RLH. R196 is a binding site for FMN.

It belongs to the pyridoxamine 5'-phosphate oxidase family. Homodimer. FMN serves as cofactor.

The catalysed reaction is pyridoxamine 5'-phosphate + O2 + H2O = pyridoxal 5'-phosphate + H2O2 + NH4(+). The enzyme catalyses pyridoxine 5'-phosphate + O2 = pyridoxal 5'-phosphate + H2O2. Its pathway is cofactor metabolism; pyridoxal 5'-phosphate salvage; pyridoxal 5'-phosphate from pyridoxamine 5'-phosphate: step 1/1. It functions in the pathway cofactor metabolism; pyridoxal 5'-phosphate salvage; pyridoxal 5'-phosphate from pyridoxine 5'-phosphate: step 1/1. Its function is as follows. Catalyzes the oxidation of either pyridoxine 5'-phosphate (PNP) or pyridoxamine 5'-phosphate (PMP) into pyridoxal 5'-phosphate (PLP). This chain is Pyridoxine/pyridoxamine 5'-phosphate oxidase, found in Flavobacterium johnsoniae (strain ATCC 17061 / DSM 2064 / JCM 8514 / BCRC 14874 / CCUG 350202 / NBRC 14942 / NCIMB 11054 / UW101) (Cytophaga johnsonae).